Here is a 550-residue protein sequence, read N- to C-terminus: MAAKDVKFGRDAREGILKGVDTLANAVKVTLGPKGRNVVIEKSFGAPRITKDGVTVAKEIELKDKYENMGAQMLREVASKTNDLAGDGTTTATVLGQAIVREGMKSVAAGMNPMDLKRGIDIAVTKVVENLKSRSKDVAGSEEIAQVGIISANGDREVGEKIAEAMEKVGKEGVITVDESKGLEFELETVEGMQFDRGYLSPYFITNPDKMTVELENPYILIHEKKLSNLQAMLPILEAAVQSGRPLLIIAEDIEGEALATLVVNKLRGGLKVAAVKAPGFGDRRKAMLQDIAILTKGEMISEDLGIKLENVTLGMLGEAKRVTIDKDNTTIVDGAGDEADIKARVNEIRTQIDNTTSDYDREKLQERLAKLAGGVAVIKVGGASEVEVKERKDRVDDALHATRAAVEEGIVPGGGTALLYATKVLEGLKGENDDQTRGIDIVRKAIVAPVRQIATNAGHDGAVISGNLLREDNESQGFNAATDTYEDLVKAGVIDPTKVVRVALQDAASVAGLLITTEAAISEVPEDKSSGGGMPDMGGMGGMGGMGGF.

Residues 30–33, K51, 87–91, G415, 480–482, and D496 each bind ATP; these read TLGP, DGTTT, and NAA.

Belongs to the chaperonin (HSP60) family. In terms of assembly, forms a cylinder of 14 subunits composed of two heptameric rings stacked back-to-back. Interacts with the co-chaperonin GroES.

The protein resides in the cytoplasm. It catalyses the reaction ATP + H2O + a folded polypeptide = ADP + phosphate + an unfolded polypeptide.. Its function is as follows. Together with its co-chaperonin GroES, plays an essential role in assisting protein folding. The GroEL-GroES system forms a nano-cage that allows encapsulation of the non-native substrate proteins and provides a physical environment optimized to promote and accelerate protein folding. The polypeptide is Chaperonin GroEL 2 (Erythrobacter litoralis (strain HTCC2594)).